The following is a 342-amino-acid chain: Putative glycosyltransferases (342 aa).

Transmembrane regions (helical) follow at residues 227–247 (IFYLGAAIFIISSSAAGYLII) and 262–282 (VIVSIWMLGGVTIFCIGLVGI).

The protein belongs to the glycosyltransferase 2 family.

The protein resides in the cell membrane. In terms of biological role, may play only a redundant role in maintaining cell wall viability and bacterial virulence. The chain is Putative glycosyltransferases (pimF) from Mycobacterium tuberculosis (strain CDC 1551 / Oshkosh).